The chain runs to 92 residues: uncharacterized protein (92 aa).

The first 23 residues, 1–23, serve as a signal peptide directing secretion; it reads MNPAIVVIIVLLVAALLIWACKA.

This is an uncharacterized protein from Acheta domesticus (House cricket).